An 81-amino-acid polypeptide reads, in one-letter code: Large ribosomal subunit protein bL27 (81 aa).

The segment covering 1-11 (MATSKSGGSSK) has biased composition (polar residues). Positions 1-24 (MATSKSGGSSKNGRDSISKRLGVK) are disordered.

This sequence belongs to the bacterial ribosomal protein bL27 family.

This is Large ribosomal subunit protein bL27 from Borrelia duttonii (strain Ly).